The sequence spans 547 residues: Chaperonin GroEL 1 (547 aa).

ATP contacts are provided by residues 29–32 (TLGP), 86–90 (DGTTT), Gly-418, 482–484 (NAA), and Asp-498.

This sequence belongs to the chaperonin (HSP60) family. In terms of assembly, forms a cylinder of 14 subunits composed of two heptameric rings stacked back-to-back. Interacts with the co-chaperonin GroES.

It localises to the cytoplasm. It catalyses the reaction ATP + H2O + a folded polypeptide = ADP + phosphate + an unfolded polypeptide.. Functionally, together with its co-chaperonin GroES, plays an essential role in assisting protein folding. The GroEL-GroES system forms a nano-cage that allows encapsulation of the non-native substrate proteins and provides a physical environment optimized to promote and accelerate protein folding. In Corynebacterium jeikeium (strain K411), this protein is Chaperonin GroEL 1.